The chain runs to 319 residues: tRNA-modifying protein YgfZ (319 aa).

Positions 27 and 189 each coordinate folate.

Belongs to the tRNA-modifying YgfZ family.

The protein localises to the cytoplasm. In terms of biological role, folate-binding protein involved in regulating the level of ATP-DnaA and in the modification of some tRNAs. It is probably a key factor in regulatory networks that act via tRNA modification, such as initiation of chromosomal replication. This is tRNA-modifying protein YgfZ from Buchnera aphidicola subsp. Acyrthosiphon pisum (strain APS) (Acyrthosiphon pisum symbiotic bacterium).